The sequence spans 251 residues: Pantothenate synthetase (251 aa).

Residue Met28–His35 participates in ATP binding. His35 serves as the catalytic Proton donor. Gln59 contacts (R)-pantoate. Gln59 contacts beta-alanine. Gly145–Asp148 is a binding site for ATP. Gln151 contacts (R)-pantoate. ATP contacts are provided by residues Val174 and Lys182–Arg185.

It belongs to the pantothenate synthetase family. As to quaternary structure, homodimer.

It is found in the cytoplasm. It carries out the reaction (R)-pantoate + beta-alanine + ATP = (R)-pantothenate + AMP + diphosphate + H(+). The protein operates within cofactor biosynthesis; (R)-pantothenate biosynthesis; (R)-pantothenate from (R)-pantoate and beta-alanine: step 1/1. Functionally, catalyzes the condensation of pantoate with beta-alanine in an ATP-dependent reaction via a pantoyl-adenylate intermediate. This Bdellovibrio bacteriovorus (strain ATCC 15356 / DSM 50701 / NCIMB 9529 / HD100) protein is Pantothenate synthetase.